Here is an 848-residue protein sequence, read N- to C-terminus: MTRYTPAEIEARWQKAWRENEVFKAIRSADKPKYYVLEMFPYPSGRIHMGHVRNYTMGDVIARYKLATGHNVLHPMGWDAFGMPAENAAMAIGGHPKDWTYGNIKDMRDQMKPLGLSIDWSREFATCDPEYYGQQQALFLDFLEAGLVYRKNAIVNWDPVDMTVLANEQVEQGRGWRSGALVERRELTQWFFKISDHSEELLSALDTLENWPAKVRLMQENWIGKSRGLQFAFSTIDGPDGHDRIEVYTTRPDTLLGASFVGISPDHPLAKLLERDNDNVAAFCAECRKGGTTEEAIETAEKLGFDTGLRVRHPFDTAAELPVYIANFILMDYGTGAIFGCPAHDQRDFEFATKYDLPIISTFLPSQDADEVLSEAFVPAKTEKVFYNRGFAGAEFQTGLEAIDAAIDFCESNGIGQGVTKYRLRDWGLSRQRYWGCPIPVVHCDDCGVVPEKKENLPIELPYDVSFDTPGNPLNRHPTWRDTPCPACGKPAQRETDTMDTFVDSSWYFARFTAPRAETPTVMEDAQYWMNVDQYIGGIEHAILHLLYSRFFARAMQMTGHLPQSAIEPFDALFTQGMVTHEIYQTRDANGRPVYHLPEDVTDGRLADGTEVEIIPSAKMSKSKKNVVDPLGIIASYGADTARWFVLSDSPPERDVEWTASGAEAAFKHLTRVWTLSERIGKMDKDAAGQGDEDLLRAMHVCIHDVTMGIESFGFNAAIAKLYAFTAKLQKSKAGYGAQRTAIMTLAQLMSPMTPHLAEDIWAHQGGDGLVTTAPWPRADEAMLVSDTVTLPVQINGKRRAEIVISADLSKEEVEKIALADPAVIRSLNGATPKKIIVVPGRIVNVVV.

Residues 41-51 carry the 'HIGH' region motif; the sequence is PYPSGRIHMGH. Positions 619 to 623 match the 'KMSKS' region motif; that stretch reads KMSKS. Lys622 is an ATP binding site.

This sequence belongs to the class-I aminoacyl-tRNA synthetase family.

The protein localises to the cytoplasm. It catalyses the reaction tRNA(Leu) + L-leucine + ATP = L-leucyl-tRNA(Leu) + AMP + diphosphate. The polypeptide is Leucine--tRNA ligase (Roseobacter denitrificans (strain ATCC 33942 / OCh 114) (Erythrobacter sp. (strain OCh 114))).